The chain runs to 107 residues: Glutaredoxin-1 (107 aa).

Position 2 is an N-acetylalanine (alanine 2). A Glutaredoxin domain is found at 3–106 (QEFVNCKIQS…TRLKQIGALQ (104 aa)). Lysine 9 bears the N6-succinyllysine mark. 2 cysteine pairs are disulfide-bonded: cysteine 23-cysteine 26 and cysteine 79-cysteine 83.

This sequence belongs to the glutaredoxin family.

It is found in the cytoplasm. In terms of biological role, has a glutathione-disulfide oxidoreductase activity in the presence of NADPH and glutathione reductase. Reduces low molecular weight disulfides and proteins. The chain is Glutaredoxin-1 (Glrx) from Mus musculus (Mouse).